Consider the following 251-residue polypeptide: Octanoyltransferase (251 aa).

A BPL/LPL catalytic domain is found at 56-237; sequence ADTGDEIWVV…RLIANLDGES (182 aa). Residues 96-103, 168-170, and 181-183 contribute to the substrate site; these read RGGQITYH, ALG, and GLS. Cys-199 functions as the Acyl-thioester intermediate in the catalytic mechanism.

It belongs to the LipB family.

The protein resides in the cytoplasm. The enzyme catalyses octanoyl-[ACP] + L-lysyl-[protein] = N(6)-octanoyl-L-lysyl-[protein] + holo-[ACP] + H(+). Its pathway is protein modification; protein lipoylation via endogenous pathway; protein N(6)-(lipoyl)lysine from octanoyl-[acyl-carrier-protein]: step 1/2. Functionally, catalyzes the transfer of endogenously produced octanoic acid from octanoyl-acyl-carrier-protein onto the lipoyl domains of lipoate-dependent enzymes. Lipoyl-ACP can also act as a substrate although octanoyl-ACP is likely to be the physiological substrate. The chain is Octanoyltransferase from Burkholderia ambifaria (strain MC40-6).